The chain runs to 138 residues: Ribulose bisphosphate carboxylase small subunit (138 aa).

It belongs to the RuBisCO small chain family. Heterohexadecamer of 8 large and 8 small subunits.

The protein localises to the plastid. Its subcellular location is the chloroplast. In terms of biological role, ruBisCO catalyzes two reactions: the carboxylation of D-ribulose 1,5-bisphosphate, the primary event in carbon dioxide fixation, as well as the oxidative fragmentation of the pentose substrate in the photorespiration process. Both reactions occur simultaneously and in competition at the same active site. Although the small subunit is not catalytic it is essential for maximal activity. The protein is Ribulose bisphosphate carboxylase small subunit of Pyropia suborbiculata (Red alga).